Reading from the N-terminus, the 428-residue chain is 3-phosphoshikimate 1-carboxyvinyltransferase (428 aa).

3-phosphoshikimate is bound by residues Lys-23, Ser-24, and Arg-28. Lys-23 is a phosphoenolpyruvate binding site. Phosphoenolpyruvate contacts are provided by Gly-92 and Arg-120. 3-phosphoshikimate is bound by residues Ser-165, Gln-167, Asp-312, and Lys-339. Gln-167 contacts phosphoenolpyruvate. Residue Asp-312 is the Proton acceptor of the active site. Arg-343 and Arg-384 together coordinate phosphoenolpyruvate.

Belongs to the EPSP synthase family. Monomer.

It localises to the cytoplasm. The enzyme catalyses 3-phosphoshikimate + phosphoenolpyruvate = 5-O-(1-carboxyvinyl)-3-phosphoshikimate + phosphate. It participates in metabolic intermediate biosynthesis; chorismate biosynthesis; chorismate from D-erythrose 4-phosphate and phosphoenolpyruvate: step 6/7. Functionally, catalyzes the transfer of the enolpyruvyl moiety of phosphoenolpyruvate (PEP) to the 5-hydroxyl of shikimate-3-phosphate (S3P) to produce enolpyruvyl shikimate-3-phosphate and inorganic phosphate. The protein is 3-phosphoshikimate 1-carboxyvinyltransferase of Sulfurimonas denitrificans (strain ATCC 33889 / DSM 1251) (Thiomicrospira denitrificans (strain ATCC 33889 / DSM 1251)).